The following is a 431-amino-acid chain: Glucose-1-phosphate adenylyltransferase (431 aa).

A beta-D-fructose 1,6-bisphosphate-binding site is contributed by Lys-39. AMP contacts are provided by Arg-40, His-46, and Arg-52. Alpha-D-glucose 1-phosphate is bound at residue Tyr-114. Position 130 (Arg-130) interacts with AMP. Residues Gly-179, 194 to 195 (EK), and Ser-212 contribute to the alpha-D-glucose 1-phosphate site. Residues Glu-370 and Arg-386 each contribute to the AMP site. Residues 419–423 (REMLR) and 429–431 (QER) contribute to the beta-D-fructose 1,6-bisphosphate site.

It belongs to the bacterial/plant glucose-1-phosphate adenylyltransferase family. In terms of assembly, homotetramer.

It catalyses the reaction alpha-D-glucose 1-phosphate + ATP + H(+) = ADP-alpha-D-glucose + diphosphate. The protein operates within glycan biosynthesis; glycogen biosynthesis. Its activity is regulated as follows. Allosterically activated by fructose-1,6-bisphosphate (F16BP) and inhibited by AMP. Functionally, involved in the biosynthesis of ADP-glucose, a building block required for the elongation reactions to produce glycogen. Catalyzes the reaction between ATP and alpha-D-glucose 1-phosphate (G1P) to produce pyrophosphate and ADP-Glc. The polypeptide is Glucose-1-phosphate adenylyltransferase (Salmonella paratyphi A (strain ATCC 9150 / SARB42)).